A 170-amino-acid polypeptide reads, in one-letter code: Cyclic pyranopterin monophosphate synthase (170 aa).

The interval 1 to 25 (MADPSTLTHPDPEGGVRMMDASQKS) is disordered. Substrate contacts are provided by residues 78–80 (LCH) and 116–117 (ME). Asp-131 is an active-site residue.

Belongs to the MoaC family. Homohexamer; trimer of dimers.

The enzyme catalyses (8S)-3',8-cyclo-7,8-dihydroguanosine 5'-triphosphate = cyclic pyranopterin phosphate + diphosphate. It functions in the pathway cofactor biosynthesis; molybdopterin biosynthesis. Its function is as follows. Catalyzes the conversion of (8S)-3',8-cyclo-7,8-dihydroguanosine 5'-triphosphate to cyclic pyranopterin monophosphate (cPMP). This chain is Cyclic pyranopterin monophosphate synthase, found in Salinibacter ruber (strain DSM 13855 / M31).